A 135-amino-acid chain; its full sequence is Large ribosomal subunit protein mL41 (135 aa).

Residues 1–13 constitute a mitochondrion transit peptide; it reads MGFLTAVTQGLVR.

Belongs to the mitochondrion-specific ribosomal protein mL41 family. Component of the mitochondrial ribosome large subunit (39S) which comprises a 16S rRNA and about 50 distinct proteins. Interacts with BCL2.

It localises to the mitochondrion. Component of the mitochondrial ribosome large subunit. Also involved in apoptosis and cell cycle. Enhances p53/TP53 stability, thereby contributing to p53/TP53-induced apoptosis in response to growth-inhibitory condition. Enhances p53/TP53 translocation to the mitochondria. Has the ability to arrest the cell cycle at the G1 phase, possibly by stabilizing the CDKN1A and CDKN1B (p27Kip1) proteins. This is Large ribosomal subunit protein mL41 (Mrpl41) from Mus musculus (Mouse).